The sequence spans 525 residues: Protein kinase PINOID 2 (525 aa).

The tract at residues 1-27 is disordered; that stretch reads MANSSIFYKDNESDYESSTVGPDSSRR. Residues 87–465 enclose the Protein kinase domain; it reads FRLLKRLGSG…SIEIKRHEFF (379 aa). Residues 93–101 and lysine 118 contribute to the ATP site; that span reads LGSGDIGSV. Aspartate 214 serves as the catalytic Proton acceptor. The AGC-kinase C-terminal domain occupies 466–525; sequence EGVNWALIRSIKPPWVPKEETSHKTKGDNRSVNYYLPPRFMMSRKERNEPYHVSNYFDYF.

Belongs to the protein kinase superfamily. Ser/Thr protein kinase family.

The catalysed reaction is L-seryl-[protein] + ATP = O-phospho-L-seryl-[protein] + ADP + H(+). It catalyses the reaction L-threonyl-[protein] + ATP = O-phospho-L-threonyl-[protein] + ADP + H(+). In terms of biological role, serine/threonine-protein kinase involved in the regulation of auxin signaling. Plays a minor role in the regulation of cellular auxin efflux and cotyledon organogenesis. This is Protein kinase PINOID 2 (PID2) from Arabidopsis thaliana (Mouse-ear cress).